We begin with the raw amino-acid sequence, 20 residues long: Cicerin (20 aa).

Positions 1–20 (ARCENFADSYRQPPISSSQT) are disordered.

Its function is as follows. Has antifungal activity against B.cinerea, F.oxysporum and M.arachidicola. Inhibits cell-free translation in rabbit reticulocyte lysate system. This Cicer arietinum (Chickpea) protein is Cicerin.